We begin with the raw amino-acid sequence, 93 residues long: Acylphosphatase (93 aa).

The Acylphosphatase-like domain occupies 3–93 (KQQYFISGKV…FQFNNFKIYY (91 aa)). Catalysis depends on residues arginine 18 and asparagine 36.

Belongs to the acylphosphatase family.

The catalysed reaction is an acyl phosphate + H2O = a carboxylate + phosphate + H(+). This is Acylphosphatase (acyP) from Borrelia garinii subsp. bavariensis (strain ATCC BAA-2496 / DSM 23469 / PBi) (Borreliella bavariensis).